The chain runs to 355 residues: MSAASREERSGPPGSFAKRVLVTGGAGFIASHVIVSLVEDYPDYMIVNLDKLDYCASLKNLEPVSNKQNYKFIQGDICDSHFVKLLFEVEKIDIVLHFAAQTHVDLSFVRAFEFTYVNVYGTHVLVNAAYEAGVEKFIYVSTDEVYGGSLDQEFDESSPKQPTNPYASSKAAAECFVQSYWERYKFPVVITRSSNVYGPHQYPEKVIPKFISLLQHNRKCCIHGSGLQRRNFLYAADVVEAFLTVLTKGEPGEIYNIGTNFEMSVVQLAKELIQLIKETNSESETESWVDYVSDRPHNDMRYPMKSEKIHSLGWKPKVPWEEGIKKTVEWYRKNFHNWKNAEKALEPFPVQPPFM.

Threonine 142 provides a ligand contact to substrate. The active-site Proton donor is aspartate 143. Catalysis depends on proton acceptor residues glutamate 144 and tyrosine 166.

Belongs to the NAD(P)-dependent epimerase/dehydratase family. dTDP-glucose dehydratase subfamily. NAD(+) serves as cofactor.

The catalysed reaction is dTDP-alpha-D-glucose = dTDP-4-dehydro-6-deoxy-alpha-D-glucose + H2O. The protein is dTDP-D-glucose 4,6-dehydratase (Tgds) of Mus musculus (Mouse).